The primary structure comprises 578 residues: Protein RIK (578 aa).

Residues 1-34 (MTEDNDEARVPLSDSSTTNDASRTRQRRKRKWDK) form a disordered region. Residues 206 to 273 (SSNVAARIRG…KSIDDAKRLA (68 aa)) form the KH domain. Positions 413-425 (ATSLSIPSDNASN) are enriched in polar residues. The disordered stretch occupies residues 413 to 578 (ATSLSIPSDN…DPDEPLTTRS (166 aa)). The segment covering 472 to 492 (PPSPRSVMPPPPPKTIAPPPS) has biased composition (pro residues). Low complexity-rich tracts occupy residues 493–503 (KTMSPPSSKSM) and 510–521 (SKTMSPLSSKSM). Positions 560–572 (YGDDEDDDDDPDE) are enriched in acidic residues.

Interacts with AS1. As to expression, expressed in vegetative tissues.

The protein localises to the nucleus. This chain is Protein RIK (RIK), found in Arabidopsis thaliana (Mouse-ear cress).